A 273-amino-acid polypeptide reads, in one-letter code: Shikimate dehydrogenase (NADP(+)) (273 aa).

Residues 15–17 and Thr62 each bind shikimate; that span reads SQS. Lys66 functions as the Proton acceptor in the catalytic mechanism. Glu78 is an NADP(+) binding site. Residues Asn87 and Asp102 each coordinate shikimate. Residues 127–131, 151–156, and Met215 contribute to the NADP(+) site; these read GAGGA and NRTVIK. Residue Tyr217 coordinates shikimate. Gly239 provides a ligand contact to NADP(+).

The protein belongs to the shikimate dehydrogenase family. As to quaternary structure, homodimer.

It carries out the reaction shikimate + NADP(+) = 3-dehydroshikimate + NADPH + H(+). It functions in the pathway metabolic intermediate biosynthesis; chorismate biosynthesis; chorismate from D-erythrose 4-phosphate and phosphoenolpyruvate: step 4/7. Involved in the biosynthesis of the chorismate, which leads to the biosynthesis of aromatic amino acids. Catalyzes the reversible NADPH linked reduction of 3-dehydroshikimate (DHSA) to yield shikimate (SA). This is Shikimate dehydrogenase (NADP(+)) from Chromobacterium violaceum (strain ATCC 12472 / DSM 30191 / JCM 1249 / CCUG 213 / NBRC 12614 / NCIMB 9131 / NCTC 9757 / MK).